A 441-amino-acid chain; its full sequence is tRNA (adenine(37)-N6)-methyltransferase (441 aa).

One can recognise a TsaA-like domain in the interval 30-168 (TEPVGYLESC…YIAEYDSPQN (139 aa)). S-adenosyl-L-methionine is bound by residues 47-49 (PRQ), 90-91 (HK), Arg-117, Leu-127, and 148-151 (IHGT). Residues 179–192 (QNNQHTPNTVSQSD) show a composition bias toward polar residues. 2 disordered regions span residues 179–231 (QNNQ…EENY) and 264–284 (SSVA…SEKG).

It belongs to the tRNA methyltransferase O family.

It catalyses the reaction N(6)-L-threonylcarbamoyladenosine(37) in tRNA + S-adenosyl-L-methionine = N(6)-methyl,N(6)-L-threonylcarbamoyladenosine(37) in tRNA + S-adenosyl-L-homocysteine + H(+). S-adenosyl-L-methionine-dependent methyltransferase responsible for the addition of the methyl group in the formation of N6-methyl-N6-threonylcarbamoyladenosine at position 37 (m(6)t(6)A37) of the tRNA anticodon loop of tRNA(Ser)(GCU). The methyl group of m(6)t(6)A37 may improve the efficiency of the tRNA decoding ability. In Homo sapiens (Human), this protein is tRNA (adenine(37)-N6)-methyltransferase.